A 367-amino-acid polypeptide reads, in one-letter code: Probable butyrate kinase (367 aa).

Belongs to the acetokinase family.

Its subcellular location is the cytoplasm. It catalyses the reaction butanoate + ATP = butanoyl phosphate + ADP. In Bacillus cereus (strain ATCC 10987 / NRS 248), this protein is Probable butyrate kinase.